The chain runs to 549 residues: Glucose-6-phosphate isomerase (549 aa).

Glu355 (proton donor) is an active-site residue. Active-site residues include His387 and Lys515.

The protein belongs to the GPI family.

The protein localises to the cytoplasm. It catalyses the reaction alpha-D-glucose 6-phosphate = beta-D-fructose 6-phosphate. It functions in the pathway carbohydrate biosynthesis; gluconeogenesis. The protein operates within carbohydrate degradation; glycolysis; D-glyceraldehyde 3-phosphate and glycerone phosphate from D-glucose: step 2/4. Its function is as follows. Catalyzes the reversible isomerization of glucose-6-phosphate to fructose-6-phosphate. The chain is Glucose-6-phosphate isomerase from Pasteurella multocida (strain Pm70).